The chain runs to 319 residues: Annexin A5 (319 aa).

Ala2 is modified (N-acetylalanine). 4 Annexin repeats span residues 13–84, 85–156, 168–240, and 244–315; these read FDGR…AMMK, PSRL…VLLQ, AQVE…AVVK, and SIPA…LLCG. A Glycyl lysine isopeptide (Lys-Gly) (interchain with G-Cter in SUMO1); alternate cross-link involves residue Lys27. Residue Lys27 forms a Glycyl lysine isopeptide (Lys-Gly) (interchain with G-Cter in SUMO2); alternate linkage. A Phosphoserine modification is found at Ser35. Lys68, Lys74, Lys77, Lys95, and Lys99 each carry N6-acetyllysine. Lys288 carries the N6-succinyllysine modification. A [IL]-x-C-x-x-[DE] motif motif is present at residues 312-318; it reads LLCGGED.

This sequence belongs to the annexin family. In terms of assembly, monomer. Binds ATRX and EIF5B. S-nitrosylation is induced by interferon-gamma and oxidatively-modified low-densitity lipoprotein (LDL(ox)) possibly implicating the iNOS-S100A8/9 transnitrosylase complex.

Its function is as follows. This protein is an anticoagulant protein that acts as an indirect inhibitor of the thromboplastin-specific complex, which is involved in the blood coagulation cascade. This is Annexin A5 (Anxa5) from Mus musculus (Mouse).